The following is a 153-amino-acid chain: Pheromone-binding protein Gp-9 (153 aa).

The first 19 residues, 1 to 19 (MKTFVLHIFIFALVAFASA), serve as a signal peptide directing secretion. Cystine bridges form between Cys-37-Cys-77, Cys-73-Cys-129, and Cys-118-Cys-138.

It belongs to the PBP/GOBP family. Homodimer.

The protein resides in the secreted. Colony queen number, a major feature of social organization, is associated with worker genotype for Gp-9. Colonies are headed by either a single reproductive queen (monogyne form) or multiple queens (polygyne form). Differences in worker Gp-9 genotypes between social forms may cause differences in workers' abilities to recognize queens and regulate their numbers. This chain is Pheromone-binding protein Gp-9, found in Solenopsis tridens (Fire ant).